The sequence spans 415 residues: Probable G-protein coupled receptor 19 (415 aa).

The Extracellular segment spans residues 1–69 (MVFAHRMDNS…LKPGEVATAS (69 aa)). Residues asparagine 25 and asparagine 52 are each glycosylated (N-linked (GlcNAc...) asparagine). The helical transmembrane segment at 70–90 (IFFGILWLFSIFGNSLVCLVI) threads the bilayer. Residues 91-102 (HRSRRTQSTTNY) lie on the Cytoplasmic side of the membrane. The chain crosses the membrane as a helical span at residues 103–123 (FVVSMACADLLISVASTPFVL). Residues 124–143 (LQFTTGRWTLGSATCKVVRY) are Extracellular-facing. A disulfide bond links cysteine 138 and cysteine 210. The chain crosses the membrane as a helical span at residues 144-161 (FQYLTPGVQIYVLLSICI). At 162 to 182 (DRFYTIVYPLSFKVSREKAKK) the chain is on the cytoplasmic side. A helical transmembrane segment spans residues 183 to 203 (MIAASWVFDAGFVTPVLFFYG). The Extracellular segment spans residues 204–221 (SNWDSHCNYFLPSSWEGT). A helical membrane pass occupies residues 222–242 (AYTVIHFLVGFVIPSVLIILF). The Cytoplasmic portion of the chain corresponds to 243–277 (YQKVIKYIWRIGTDGRTVRRTMNIVPRTKVKTIKM). Residues 278-298 (FLILNLLFLLSWLPFHVAQLW) form a helical membrane-spanning segment. The Extracellular portion of the chain corresponds to 299 to 309 (HPHEQDYKKSS). Residues 310-325 (LVFTAITWISFSSSAS) traverse the membrane as a helical segment. Topologically, residues 326-415 (KPTLYSIYNA…INSNPPNTFV (90 aa)) are cytoplasmic.

It belongs to the G-protein coupled receptor 1 family. As to expression, abundant expression in the brain.

Its subcellular location is the cell membrane. Its function is as follows. G-protein coupled receptor that plays a role in the regulation of circadian rhythms and energy metabolism. Participates in maintaining proper circadian gene expression in the suprachiasmatic nucleus (SCN), the locus of the master circadian clock in the brain. May function as a coordinator of aging-associated metabolic dysfunction, stress response, DNA integrity management, and eventual senescence. Upon binding to adropin, modulates mitochondrial energy metabolism via the p44/42-PDK4 signaling pathway, influencing pyruvate dehydrogenase activity. In Homo sapiens (Human), this protein is Probable G-protein coupled receptor 19 (GPR19).